A 158-amino-acid polypeptide reads, in one-letter code: Transcription elongation factor GreA (158 aa).

Residues 45–72 (AEYHAAREQQSFIEGRIKQLEGELSHAE) adopt a coiled-coil conformation.

Belongs to the GreA/GreB family.

In terms of biological role, necessary for efficient RNA polymerase transcription elongation past template-encoded arresting sites. The arresting sites in DNA have the property of trapping a certain fraction of elongating RNA polymerases that pass through, resulting in locked ternary complexes. Cleavage of the nascent transcript by cleavage factors such as GreA or GreB allows the resumption of elongation from the new 3'terminus. GreA releases sequences of 2 to 3 nucleotides. In Xanthomonas campestris pv. campestris (strain ATCC 33913 / DSM 3586 / NCPPB 528 / LMG 568 / P 25), this protein is Transcription elongation factor GreA.